The sequence spans 220 residues: MTQDEMKKAAGWAALKYVERDSIVGVGTGSTVNHFIDALATMKADIEGAVSSSEASTQKMKALGIPVYDLNSVDRLSVYVDGADEINDRMDMIKGGGAALTREKIVAAVAEKFICIVDNTKQVDILGEFPLPVEVIPMARSYVARQLVKLGGDPVYREGVVTDNGNVILDVYNLKILNPKELESQINEIVGVVTNGLFAKRGADVLLVGTPDGVKTFTAE.

Substrate contacts are provided by residues 28-31, 81-84, and 94-97; these read TGST, DGAD, and KGGG. E103 (proton acceptor) is an active-site residue. K121 is a binding site for substrate.

Belongs to the ribose 5-phosphate isomerase family. As to quaternary structure, homodimer.

It catalyses the reaction aldehydo-D-ribose 5-phosphate = D-ribulose 5-phosphate. Its pathway is carbohydrate degradation; pentose phosphate pathway; D-ribose 5-phosphate from D-ribulose 5-phosphate (non-oxidative stage): step 1/1. In terms of biological role, catalyzes the reversible conversion of ribose-5-phosphate to ribulose 5-phosphate. The sequence is that of Ribose-5-phosphate isomerase A from Shewanella baltica (strain OS223).